The chain runs to 243 residues: Small ribosomal subunit protein mS23 (243 aa).

This sequence belongs to the mitochondrion-specific ribosomal protein mS23 family. As to quaternary structure, component of the mitochondrial small ribosomal subunit.

The protein localises to the mitochondrion. This Emericella nidulans (strain FGSC A4 / ATCC 38163 / CBS 112.46 / NRRL 194 / M139) (Aspergillus nidulans) protein is Small ribosomal subunit protein mS23 (rsm25).